Consider the following 69-residue polypeptide: MKPGIHPDYHVTQVTCTCGNSFVTRSTAPNGVIRAEICSSCHPFYTGKQKILDTGGRVARFEKRFGKRK.

Cys16, Cys18, Cys38, and Cys41 together coordinate Zn(2+).

Belongs to the bacterial ribosomal protein bL31 family. Type A subfamily. As to quaternary structure, part of the 50S ribosomal subunit. Requires Zn(2+) as cofactor.

In terms of biological role, binds the 23S rRNA. The chain is Large ribosomal subunit protein bL31 from Thermobifida fusca (strain YX).